Reading from the N-terminus, the 81-residue chain is uncharacterized protein (81 aa).

It belongs to the ycf70 family.

It is found in the plastid. The protein resides in the chloroplast. This is an uncharacterized protein from Saccharum officinarum (Sugarcane).